A 477-amino-acid polypeptide reads, in one-letter code: Mitochondrial adenyl nucleotide antiporter SLC25A24 (477 aa).

The tract at residues 1-174 (MHQLIRKFVF…RYWKKSTVLD (174 aa)) is regulatory N-terminal domain. Over 1–198 (MHQLIRKFVF…EKTTGMWWKQ (198 aa)) the chain is Mitochondrial intermembrane. The EF-hand 1 domain occupies 20 to 55 (DNTKSFAELFEKLDVNKDGKVDVSELKTGLAAMGFS). Residues Asp33, Asn35, Asp37, Lys39, Glu44, Asp69, Asp71, Asp73, Glu80, Asp100, Asn102, Asp104, Arg106, Glu111, Asp136, Asp138, Thr140, Thr142, and Glu147 each coordinate Ca(2+). 2 consecutive EF-hand domains span residues 87 to 122 (EHEKKLRLTFKSLDKNEDGRVDAKEIQQSLKDLGIN) and 123 to 158 (LSDKDAEKILHSIDVDGTMTLDWNEWREHFLFNPAE). The segment at 160–169 (LQQIIRYWKK) is linker region. Positions 175–477 (IGDSLTIPDE…YMRSGLGISK (303 aa)) are C-terminal transmembrane transporter domain. Solcar repeat units follow at residues 193–279 (GMWW…YKKL), 287–372 (VQSH…LKNT), and 384–472 (PGVL…MRSG). The helical transmembrane segment at 199-216 (LAAGGVAGAVSRTGTAPL) threads the bilayer. Topologically, residues 217–253 (DRMKVFMQVHSSKTNKISLVNGFKQMIKEGGVASLWR) are mitochondrial matrix. The helical transmembrane segment at 254-273 (GNGVNVIKIAPETAIKFMAY) threads the bilayer. The Mitochondrial intermembrane portion of the chain corresponds to 274-296 (EQYKKLLSKDGGKVQSHERFMAG). The helical transmembrane segment at 297–310 (SLAGATAQTAIYPM) threads the bilayer. Topologically, residues 311-346 (EVMKTRLTLRKTGQYSGMFDCAKKILRKEGVKAFYK) are mitochondrial matrix. Residues 347-366 (GYVPNILGIIPYAGIDLAVY) form a helical membrane-spanning segment. Topologically, residues 367–389 (ETLKNTWLSHYAKDTANPGVLVL) are mitochondrial intermembrane. Residues 390–407 (LGCGTISSTCGQLASYPL) form a helical membrane-spanning segment. Topologically, residues 408-446 (ALIRTRMQAMASMEGSEQVSMSKLVKKIMQKEGFFGLYR) are mitochondrial matrix. Residues 447 to 466 (GILPNFMKVIPAVSISYVVY) form a helical membrane-spanning segment. Over 467–477 (EYMRSGLGISK) the chain is Mitochondrial intermembrane.

It belongs to the mitochondrial carrier (TC 2.A.29) family. As to quaternary structure, monomer.

It localises to the mitochondrion inner membrane. The enzyme catalyses Mg(2+)(out) + phosphate(in) + ATP(out) = Mg(2+)(in) + phosphate(out) + ATP(in). It carries out the reaction ADP(out) + phosphate(in) + H(+)(out) = ADP(in) + phosphate(out) + H(+)(in). The catalysed reaction is AMP(out) + phosphate(in) = AMP(in) + phosphate(out). It catalyses the reaction phosphate(in) + ATP(out) + 2 H(+)(out) = phosphate(out) + ATP(in) + 2 H(+)(in). The enzyme catalyses dADP(in) + ADP(out) = dADP(out) + ADP(in). It carries out the reaction Mg(2+)(in) + ADP(out) + ATP(in) + H(+)(out) = Mg(2+)(out) + ADP(in) + ATP(out) + H(+)(in). The catalysed reaction is ADP(out) + diphosphate(in) = ADP(in) + diphosphate(out). It catalyses the reaction dAMP(in) + ADP(out) + H(+)(out) = dAMP(out) + ADP(in) + H(+)(in). The enzyme catalyses 3'-AMP(in) + ADP(out) + H(+)(out) = 3'-AMP(out) + ADP(in) + H(+)(in). It carries out the reaction dAMP(out) + phosphate(in) = dAMP(in) + phosphate(out). The catalysed reaction is 3'-AMP(out) + phosphate(in) = 3'-AMP(in) + phosphate(out). It catalyses the reaction dADP(out) + phosphate(in) + H(+)(out) = dADP(in) + phosphate(out) + H(+)(in). Its activity is regulated as follows. Activated by an increase in cytosolic calcium levels that induce a conformational change of the N-terminal regulatory domain, uncapping the channel and allowing transport. Inhibited by bathophenanthroline, mersalyl, p-hydroxymercuribenzoate, bromcresol purple and tannic acid. In terms of biological role, electroneutral antiporter that mediates the transport of adenyl nucleotides through the inner mitochondrial membrane. Originally identified as an ATP-magnesium/inorganic phosphate antiporter, it also acts as a broad specificity adenyl nucleotide antiporter. By regulating the mitochondrial matrix adenyl nucleotide pool could adapt to changing cellular energetic demands and indirectly regulate adenyl nucleotide-dependent metabolic pathways. The sequence is that of Mitochondrial adenyl nucleotide antiporter SLC25A24 (slc25a24) from Danio rerio (Zebrafish).